The following is a 161-amino-acid chain: Cyclic pyranopterin monophosphate synthase (161 aa).

Substrate-binding positions include Leu78 to His80 and Met116 to Glu117. The active site involves Asp131.

The protein belongs to the MoaC family. In terms of assembly, homohexamer; trimer of dimers.

It carries out the reaction (8S)-3',8-cyclo-7,8-dihydroguanosine 5'-triphosphate = cyclic pyranopterin phosphate + diphosphate. It participates in cofactor biosynthesis; molybdopterin biosynthesis. In terms of biological role, catalyzes the conversion of (8S)-3',8-cyclo-7,8-dihydroguanosine 5'-triphosphate to cyclic pyranopterin monophosphate (cPMP). This Bordetella parapertussis (strain 12822 / ATCC BAA-587 / NCTC 13253) protein is Cyclic pyranopterin monophosphate synthase.